The sequence spans 360 residues: MASMMFTDCSSTTTSRLIHLNRSSGTFLLRQCVGQLRLQTTASGRGCCIRSSSSPISSISADTKSEGGAIVIDGKAVAKKIRDEITIEVSRMKESIGVIPGLAVILVGDRKDSATYVRNKKKACDSVGIKSFEVRLAEDSSEEEVLKSVSGFNDDPSVHGILVQLPLPSHMDEQNILNAVSIEKDVDGFHPLNIGRLAMRGREPLFVPCTPKGCIELLHRYNIEIKGKRAVVIGRSNIVGMPAALLLQREDATVSIIHSRTKNPEEITREADIIISAVGQPNMVRGSWIKPGAVLIDVGINPVEDPSAARGYRLVGDICYEEASKVASAITPVPGGVGPMTIAMLLSNTLTSAKRIHNFQ.

A chloroplast-targeting transit peptide spans 1-51; it reads MASMMFTDCSSTTTSRLIHLNRSSGTFLLRQCVGQLRLQTTASGRGCCIRS. Serine 52 carries the post-translational modification N-acetylserine.

It belongs to the tetrahydrofolate dehydrogenase/cyclohydrolase family. As to quaternary structure, homodimer.

It is found in the plastid. The protein resides in the chloroplast. It catalyses the reaction (6R)-5,10-methylene-5,6,7,8-tetrahydrofolate + NADP(+) = (6R)-5,10-methenyltetrahydrofolate + NADPH. The enzyme catalyses (6R)-5,10-methenyltetrahydrofolate + H2O = (6R)-10-formyltetrahydrofolate + H(+). The protein operates within one-carbon metabolism; tetrahydrofolate interconversion. Catalyzes the oxidation of 5,10-methylenetetrahydrofolate to 5,10-methenyltetrahydrofolate and then the hydrolysis of 5,10-methenyltetrahydrofolate to 10-formyltetrahydrofolate. The chain is Bifunctional protein FolD 4, chloroplastic (FOLD4) from Arabidopsis thaliana (Mouse-ear cress).